We begin with the raw amino-acid sequence, 237 residues long: Cytosolic-abundant heat soluble protein 86272 (237 aa).

The tract at residues 96-125 is disordered; the sequence is FKDQEKYSREQAAIARAHDKDLEKKTEEYR. The segment covering 111-125 has biased composition (basic and acidic residues); the sequence is RAHDKDLEKKTEEYR. Residues 115–193 adopt a coiled-coil conformation; the sequence is KDLEKKTEEY…MNALEQSKMA (79 aa). CAHS motif regions lie at residues 124-142 and 161-179; these read YRKTAEAEAEKIRKELEKQ and QKREVDLEAKYAKKELEHE. The segment covering 204-215 has biased composition (low complexity); it reads AGTTVSGGTTVS. The tract at residues 204-237 is disordered; that stretch reads AGTTVSGGTTVSEHTEVHDGKEKKSLGEKIKSLF. A compositionally biased stretch (basic and acidic residues) spans 216–237; sequence EHTEVHDGKEKKSLGEKIKSLF.

The protein belongs to the Cytosolic-abundant heat soluble protein (CAHS) family.

It localises to the cytoplasm. Its function is as follows. CAHS proteins are cytosolic heat soluble proteins that seem to contribute to the anhydrobiosis in tardigrades, but their specific mechanisms are yet to be identified. It is possible that protection during anhydrobiosis might occur via the stabilization of vitrifying small molecules such as sugars, but not via the direct glass transition of CAHS proteins themselves. This chain is Cytosolic-abundant heat soluble protein 86272, found in Hypsibius exemplaris (Freshwater tardigrade).